The chain runs to 312 residues: Peptide methionine sulfoxide reductase MsrA/MsrB 1 (312 aa).

Residues 1-155 form a peptide methionine sulfoxide reductase region; the sequence is MAEIYLAGGC…PSGYCHIDVT (155 aa). Cys-10 is an active-site residue. In terms of domain architecture, MsrB spans 172 to 295; the sequence is QEVLKASLSE…NSASLRFVAK (124 aa). The Nucleophile role is filled by Cys-284.

It in the N-terminal section; belongs to the MsrA Met sulfoxide reductase family. This sequence in the C-terminal section; belongs to the MsrB Met sulfoxide reductase family.

The protein resides in the cell membrane. The enzyme catalyses L-methionyl-[protein] + [thioredoxin]-disulfide + H2O = L-methionyl-(S)-S-oxide-[protein] + [thioredoxin]-dithiol. It catalyses the reaction [thioredoxin]-disulfide + L-methionine + H2O = L-methionine (S)-S-oxide + [thioredoxin]-dithiol. It carries out the reaction L-methionyl-[protein] + [thioredoxin]-disulfide + H2O = L-methionyl-(R)-S-oxide-[protein] + [thioredoxin]-dithiol. Its function is as follows. Has an important function as a repair enzyme for proteins that have been inactivated by oxidation. Catalyzes the reversible oxidation-reduction of methionine sulfoxide in proteins to methionine. This chain is Peptide methionine sulfoxide reductase MsrA/MsrB 1 (msrAB1), found in Streptococcus pneumoniae serotype 4 (strain ATCC BAA-334 / TIGR4).